Here is a 318-residue protein sequence, read N- to C-terminus: Replication factor C small subunit (318 aa).

43–50 serves as a coordination point for ATP; the sequence is GSVGTGKT.

The protein belongs to the activator 1 small subunits family. RfcS subfamily. Heteromultimer composed of small subunits (RfcS) and large subunits (RfcL).

Part of the RFC clamp loader complex which loads the PCNA sliding clamp onto DNA. In Thermoplasma acidophilum (strain ATCC 25905 / DSM 1728 / JCM 9062 / NBRC 15155 / AMRC-C165), this protein is Replication factor C small subunit.